Consider the following 62-residue polypeptide: MTIAFQLALFALIATSSILLISVPIVFASSDGWSSNKNVVFSGTSLWIGLVFLVAILNSLIS.

2 helical membrane-spanning segments follow: residues 8-28 (ALFA…IVFA) and 41-61 (FSGT…NSLI).

Belongs to the PsbZ family. As to quaternary structure, PSII is composed of 1 copy each of membrane proteins PsbA, PsbB, PsbC, PsbD, PsbE, PsbF, PsbH, PsbI, PsbJ, PsbK, PsbL, PsbM, PsbT, PsbY, PsbZ, Psb30/Ycf12, at least 3 peripheral proteins of the oxygen-evolving complex and a large number of cofactors. It forms dimeric complexes.

Its subcellular location is the plastid. It is found in the chloroplast thylakoid membrane. Functionally, may control the interaction of photosystem II (PSII) cores with the light-harvesting antenna, regulates electron flow through the 2 photosystem reaction centers. PSII is a light-driven water plastoquinone oxidoreductase, using light energy to abstract electrons from H(2)O, generating a proton gradient subsequently used for ATP formation. This Drimys granadensis protein is Photosystem II reaction center protein Z.